The primary structure comprises 292 residues: E3 ubiquitin-protein ligase RNF144A (292 aa).

Positions 16–236 are TRIAD supradomain; that stretch reads PLVSCKLCLG…YDKGPCRNKL (221 aa). Positions 20, 23, 43, 46, 111, 116, 135, 138, 143, 146, 151, 156, 185, and 188 each coordinate Zn(2+). The RING-type 1 zinc finger occupies 20-70; sequence CKLCLGEYPAEQMTTIAQCQCIFCTLCLKQYVELLIKEGLETAISCPDAAC. An IBR-type zinc finger spans residues 91–156; the sequence is QRYKKLQFER…KARWHPGQGC (66 aa). The segment at 185–214 adopts an RING-type 2; atypical zinc-finger fold; it reads CPKCRVYIERDEGCAQMMCKNCKHAFCWYC. The active site involves C198. Residues C203, C206, C211, C214, H226, and C232 each coordinate Zn(2+). Residues 250-270 traverse the membrane as a helical segment; that stretch reads VVGIFAGFGLLLLVASPFLLL.

This sequence belongs to the RBR family. RNF144 subfamily. Self-associates. Interacts with UBE2L3. Autoubiquitinated.

It is found in the cell membrane. The protein resides in the cytoplasmic vesicle membrane. The enzyme catalyses [E2 ubiquitin-conjugating enzyme]-S-ubiquitinyl-L-cysteine + [acceptor protein]-L-lysine = [E2 ubiquitin-conjugating enzyme]-L-cysteine + [acceptor protein]-N(6)-ubiquitinyl-L-lysine.. It participates in protein modification; protein ubiquitination. E3 ubiquitin-protein ligase which accepts ubiquitin from E2 ubiquitin-conjugating enzymes UBE2L3 and UBE2L6 in the form of a thioester and then directly transfers the ubiquitin to targeted substrates. Mediates the ubiquitination and degradation of the DNA damage kinase PRKDC during DNA damage. Positively regulates DNA virus or exogenous cytosolic DNA-triggered innate immune response by mediating STING1 ubiquitination and increasing its 'Lys-6'-linked ubiquitination and translocation from the endoplasmic reticulum to the Golgi leading to downstream signaling pathways. Plays a positive role in EGF-dependent cell proliferation by prolonging EGF/EGFR signaling during EGF stimulation through EGFR ubiquitination. Increases ERK activity independently of EGFR signaling by promoting polyubiquitination and subsequent degradation of VRK3 in the cytosol. This Mus musculus (Mouse) protein is E3 ubiquitin-protein ligase RNF144A (Rnf144a).